The following is a 339-amino-acid chain: uncharacterized protein (339 aa).

Residues I54, K78, D101, N128, Y213, and K217 each coordinate NADP(+). The active-site Proton donor is Y213. K217 acts as the Lowers pKa of active site Tyr in catalysis.

It belongs to the short-chain dehydrogenases/reductases (SDR) family.

This is an uncharacterized protein from Schizosaccharomyces pombe (strain 972 / ATCC 24843) (Fission yeast).